A 924-amino-acid chain; its full sequence is Lon protease homolog 3, mitochondrial (924 aa).

A mitochondrion-targeting transit peptide spans Met-1–Ala-63. Positions Val-112 to Val-325 constitute a Lon N-terminal domain. Position 447-454 (Gly-447–Thr-454) interacts with ATP. Positions Gln-738–Tyr-922 constitute a Lon proteolytic domain. Active-site residues include Ser-828 and Lys-871.

Belongs to the peptidase S16 family. In terms of assembly, homohexamer or homoheptamer. Organized in a ring with a central cavity.

It localises to the mitochondrion matrix. It carries out the reaction Hydrolysis of proteins in presence of ATP.. In terms of biological role, ATP-dependent serine protease that mediates the selective degradation of misfolded, unassembled or oxidatively damaged polypeptides as well as certain short-lived regulatory proteins in the mitochondrial matrix. May also have a chaperone function in the assembly of inner membrane protein complexes. Participates in the regulation of mitochondrial gene expression and in the maintenance of the integrity of the mitochondrial genome. Binds to mitochondrial DNA in a site-specific manner. The chain is Lon protease homolog 3, mitochondrial (LON3) from Arabidopsis thaliana (Mouse-ear cress).